Consider the following 78-residue polypeptide: Large ribosomal subunit protein bL28B (78 aa).

Belongs to the bacterial ribosomal protein bL28 family.

The sequence is that of Large ribosomal subunit protein bL28B (rpmB2) from Streptomyces coelicolor (strain ATCC BAA-471 / A3(2) / M145).